Reading from the N-terminus, the 218-residue chain is 7-cyano-7-deazaguanine synthase (218 aa).

11–21 (LSGGMDSATLL) contributes to the ATP binding site. 4 residues coordinate Zn(2+): C193, C201, C204, and C207.

The protein belongs to the QueC family. Zn(2+) serves as cofactor.

The catalysed reaction is 7-carboxy-7-deazaguanine + NH4(+) + ATP = 7-cyano-7-deazaguanine + ADP + phosphate + H2O + H(+). It participates in purine metabolism; 7-cyano-7-deazaguanine biosynthesis. Its function is as follows. Catalyzes the ATP-dependent conversion of 7-carboxy-7-deazaguanine (CDG) to 7-cyano-7-deazaguanine (preQ(0)). The polypeptide is 7-cyano-7-deazaguanine synthase (Aquifex aeolicus (strain VF5)).